Here is a 102-residue protein sequence, read N- to C-terminus: Circadian clock oscillator protein KaiA (102 aa).

In terms of domain architecture, KaiA C-terminal spans 1–102; it reads MTQEVDQQIL…CEAYRGAIFK (102 aa).

The protein belongs to the KaiA family. As to quaternary structure, homodimer. The KaiABC complex composition changes during the circadian cycle to control KaiC phosphorylation. Complexes KaiC(6), KaiA(2-4):KaiC(6), KaiB(6):KaiC(6) and KaiC(6):KaiB(6):KaiA(12) are among the most important forms, many form cooperatively. KaiA and CikA bind to the same region of the KaiB(fs) form and therefore compete.

Functionally, key component of the KaiABC oscillator complex, which constitutes the main circadian regulator in cyanobacteria. Complex composition changes during the circadian cycle to control KaiC phosphorylation. KaiA stimulates KaiC autophosphorylation, while KaiB sequesters KaiA, leading to KaiC autodephosphorylation. KaiA binding to the KaiC CII domain during the subjective day yields KaiA(2-4):KaiC(6) complexes which stimulate KaiC autophosphorylation. Phospho-Ser-431 KaiC accumulation triggers binding of KaiB during the subjective night to form the KaiB(6):KaiC(6) complex, leading to changes in the output regulators CikA and SasA. KaiB(6):KaiC(6) formation exposes a site for KaiA binding on KaiB that sequesters KaiA from KaiC's CII domain, making the KaiC(6):KaiB(6):KaiA(12) complex resulting in KaiC autodephosphorylation. Complete dephosphorylation of KaiC leads to dissociation of KaiA(2):KaiB(1), completing 1 cycle of the Kai oscillator. This chain is Circadian clock oscillator protein KaiA, found in Nostoc sp. (strain PCC 7120 / SAG 25.82 / UTEX 2576).